Reading from the N-terminus, the 381-residue chain is MTETQSLELAKALISRPSVTPDDRDCQKLLAERLHKIGFAAEELHFGDTKNIWLRRGTKAPVVCFAGHTDVVPTGPVEKWDSPPFEPTERDGRLYGRGAADMKTSIACFVTACERFVAEHPDHQGSIALLITSDEEGDALDGTTKVVDVLKARGELIDYCIVGEPTAVDKLGDMIKNGRRGSLSGSLTVKGKQGHIAYPHLAVNPIHTFAPALLELTQEIWDEGNEYFPPTSFQISNINGGTGATNVIPGELNVKFNFRFSTESTETGLKQRVHAILDKHGVQYDLQWSCSGQPFLTHAGKLTDVARTAIAETCGVEAELSTTGGTSDGRFIKAIAKELIELGPSNATIHQINENVRLDDIPKLSAVYERILARLLAEKAV.

Histidine 68 is a Zn(2+) binding site. Aspartate 70 is an active-site residue. Aspartate 101 is a binding site for Zn(2+). The active-site Proton acceptor is glutamate 135. Residues glutamate 136, glutamate 164, and histidine 350 each contribute to the Zn(2+) site.

Belongs to the peptidase M20A family. DapE subfamily. As to quaternary structure, homodimer. Zn(2+) serves as cofactor. Requires Co(2+) as cofactor.

It carries out the reaction N-succinyl-(2S,6S)-2,6-diaminopimelate + H2O = (2S,6S)-2,6-diaminopimelate + succinate. It functions in the pathway amino-acid biosynthesis; L-lysine biosynthesis via DAP pathway; LL-2,6-diaminopimelate from (S)-tetrahydrodipicolinate (succinylase route): step 3/3. Functionally, catalyzes the hydrolysis of N-succinyl-L,L-diaminopimelic acid (SDAP), forming succinate and LL-2,6-diaminopimelate (DAP), an intermediate involved in the bacterial biosynthesis of lysine and meso-diaminopimelic acid, an essential component of bacterial cell walls. The polypeptide is Succinyl-diaminopimelate desuccinylase (Neisseria gonorrhoeae (strain ATCC 700825 / FA 1090)).